The following is a 206-amino-acid chain: Large ribosomal subunit protein uL4 (206 aa).

Positions 47 to 77 (GTHDTKTRGEVSGGGRKPWRQKGTGRARHGS) are disordered. Residues 63–77 (KPWRQKGTGRARHGS) show a composition bias toward basic residues.

It belongs to the universal ribosomal protein uL4 family. As to quaternary structure, part of the 50S ribosomal subunit.

One of the primary rRNA binding proteins, this protein initially binds near the 5'-end of the 23S rRNA. It is important during the early stages of 50S assembly. It makes multiple contacts with different domains of the 23S rRNA in the assembled 50S subunit and ribosome. Its function is as follows. Forms part of the polypeptide exit tunnel. This is Large ribosomal subunit protein uL4 from Carboxydothermus hydrogenoformans (strain ATCC BAA-161 / DSM 6008 / Z-2901).